Consider the following 119-residue polypeptide: Large ribosomal subunit protein bL19 (119 aa).

The protein belongs to the bacterial ribosomal protein bL19 family.

Its function is as follows. This protein is located at the 30S-50S ribosomal subunit interface and may play a role in the structure and function of the aminoacyl-tRNA binding site. The polypeptide is Large ribosomal subunit protein bL19 (Pseudoalteromonas atlantica (strain T6c / ATCC BAA-1087)).